A 233-amino-acid polypeptide reads, in one-letter code: uncharacterized protein (233 aa).

Residues 1-10 (MSSKLSKKKL) are compositionally biased toward basic residues. Residues 1–90 (MSSKLSKKKL…KRQKGKNNDR (90 aa)) are disordered. The segment covering 11–56 (KSLEYRSKKFDKKSQSLEEHEKKVQQKNEELEKKAADKISRDELPE) has biased composition (basic and acidic residues). Residues 76 to 85 (KTLKSKRQKG) are compositionally biased toward basic residues. The RRM domain maps to 92 to 171 (VILFVGNLPK…RKINIELTAG (80 aa)). Basic and acidic residues-rich tracts occupy residues 194–216 (MRQR…KAVA) and 224–233 (IHPDRLRLLQ). The interval 194–233 (MRQRVASEEQQAGEEKMARKAVADEGLESGIHPDRLRLLQ) is disordered.

Its subcellular location is the nucleus. It is found in the nucleolus. This is an uncharacterized protein from Schizosaccharomyces pombe (strain 972 / ATCC 24843) (Fission yeast).